Consider the following 256-residue polypeptide: Ubiquinone/menaquinone biosynthesis C-methyltransferase UbiE (256 aa).

Residues Thr79, Asp100, and 128-129 (DA) each bind S-adenosyl-L-methionine.

This sequence belongs to the class I-like SAM-binding methyltransferase superfamily. MenG/UbiE family.

It carries out the reaction a 2-demethylmenaquinol + S-adenosyl-L-methionine = a menaquinol + S-adenosyl-L-homocysteine + H(+). The enzyme catalyses a 2-methoxy-6-(all-trans-polyprenyl)benzene-1,4-diol + S-adenosyl-L-methionine = a 5-methoxy-2-methyl-3-(all-trans-polyprenyl)benzene-1,4-diol + S-adenosyl-L-homocysteine + H(+). The protein operates within quinol/quinone metabolism; menaquinone biosynthesis; menaquinol from 1,4-dihydroxy-2-naphthoate: step 2/2. Its pathway is cofactor biosynthesis; ubiquinone biosynthesis. In terms of biological role, methyltransferase required for the conversion of demethylmenaquinol (DMKH2) to menaquinol (MKH2) and the conversion of 2-polyprenyl-6-methoxy-1,4-benzoquinol (DDMQH2) to 2-polyprenyl-3-methyl-6-methoxy-1,4-benzoquinol (DMQH2). In Ectopseudomonas mendocina (strain ymp) (Pseudomonas mendocina), this protein is Ubiquinone/menaquinone biosynthesis C-methyltransferase UbiE.